The chain runs to 513 residues: ATP synthase subunit alpha (513 aa).

Position 169-176 (169-176 (GDRQTGKT)) interacts with ATP.

Belongs to the ATPase alpha/beta chains family. As to quaternary structure, F-type ATPases have 2 components, CF(1) - the catalytic core - and CF(0) - the membrane proton channel. CF(1) has five subunits: alpha(3), beta(3), gamma(1), delta(1), epsilon(1). CF(0) has three main subunits: a(1), b(2) and c(9-12). The alpha and beta chains form an alternating ring which encloses part of the gamma chain. CF(1) is attached to CF(0) by a central stalk formed by the gamma and epsilon chains, while a peripheral stalk is formed by the delta and b chains.

The protein resides in the cell inner membrane. It carries out the reaction ATP + H2O + 4 H(+)(in) = ADP + phosphate + 5 H(+)(out). Produces ATP from ADP in the presence of a proton gradient across the membrane. The alpha chain is a regulatory subunit. The protein is ATP synthase subunit alpha of Cupriavidus pinatubonensis (strain JMP 134 / LMG 1197) (Cupriavidus necator (strain JMP 134)).